Consider the following 180-residue polypeptide: Inner membrane-spanning protein YciB (180 aa).

The next 6 helical transmembrane spans lie at 4-24, 25-45, 49-69, 76-96, 118-138, and 150-170; these read LLSE…GGGI, QSAT…CYII, VSKL…ITLI, IKIK…MSGI, IILS…NEVV, and FKVF…LPLL.

It belongs to the YciB family.

Its subcellular location is the cell inner membrane. Its function is as follows. Plays a role in cell envelope biogenesis, maintenance of cell envelope integrity and membrane homeostasis. This is Inner membrane-spanning protein YciB from Rickettsia typhi (strain ATCC VR-144 / Wilmington).